Here is a 229-residue protein sequence, read N- to C-terminus: Flagellar brake protein YcgR (229 aa).

The PilZ domain occupies 134–218; sequence QLSLRVLDVS…GERALQRYID (85 aa).

Belongs to the YcgR family. As to quaternary structure, monomer. Interacts with the flagellar basal bodies.

It localises to the bacterial flagellum basal body. Its function is as follows. Acts as a flagellar brake, regulating swimming and swarming in a bis-(3'-5') cyclic diguanylic acid (c-di-GMP)-dependent manner. Binds 1 c-di-GMP dimer per subunit. Increasing levels of c-di-GMP lead to decreased motility. This is Flagellar brake protein YcgR from Methylibium petroleiphilum (strain ATCC BAA-1232 / LMG 22953 / PM1).